The primary structure comprises 432 residues: Adenylosuccinate synthetase (432 aa).

GTP is bound by residues 13-19 (GDEGKGK) and 41-43 (GHT). Residue Asp14 is the Proton acceptor of the active site. Positions 14 and 41 each coordinate Mg(2+). IMP-binding positions include 14–17 (DEGK), 39–42 (NAGH), Thr130, Arg144, Gln225, Thr240, and Arg304. His42 serves as the catalytic Proton donor. Residue 300–306 (ATTGRSR) participates in substrate binding. GTP contacts are provided by residues Arg306, 332 to 334 (KLD), and 415 to 417 (STG).

It belongs to the adenylosuccinate synthetase family. Homodimer. Mg(2+) serves as cofactor.

Its subcellular location is the cytoplasm. The enzyme catalyses IMP + L-aspartate + GTP = N(6)-(1,2-dicarboxyethyl)-AMP + GDP + phosphate + 2 H(+). Its pathway is purine metabolism; AMP biosynthesis via de novo pathway; AMP from IMP: step 1/2. Its function is as follows. Plays an important role in the de novo pathway of purine nucleotide biosynthesis. Catalyzes the first committed step in the biosynthesis of AMP from IMP. This Marinomonas sp. (strain MWYL1) protein is Adenylosuccinate synthetase.